A 477-amino-acid polypeptide reads, in one-letter code: V-type ATP synthase beta chain (477 aa).

The protein belongs to the ATPase alpha/beta chains family.

In terms of biological role, produces ATP from ADP in the presence of a proton gradient across the membrane. The V-type beta chain is a regulatory subunit. The sequence is that of V-type ATP synthase beta chain from Anaeromyxobacter dehalogenans (strain 2CP-1 / ATCC BAA-258).